Reading from the N-terminus, the 152-residue chain is Serglycin (152 aa).

A signal peptide spans 1–25 (MQVPVGSRLVLALAFVLVWGSSVQG). The propeptide at 26–74 (YPARRARYQWVRCKPNGFFANCIEEKGPQFDLIDESNNIGPPMNNPVLM) is activation peptide. An intrachain disulfide couples Cys38 to Cys47. The tract at residues 66-115 (PPMNNPVLMEGPSKDFISNYDDYGSGSGSGSGSGSGSGSGSGSGFLGDME) is disordered. Tandem repeats lie at residues 89 to 90 (GS), 91 to 92 (GS), 93 to 94 (GS), 95 to 96 (GS), 97 to 98 (GS), 99 to 100 (GS), 101 to 102 (GS), 103 to 104 (GS), 105 to 106 (GS), and 107 to 108 (GS). The tract at residues 89–108 (GSGSGSGSGSGSGSGSGSGS) is 10 X 2 AA tandem repeats of G-S. A compositionally biased stretch (gly residues) spans 90–110 (SGSGSGSGSGSGSGSGSGSGF). Residues Ser92 and Ser94 are each glycosylated (O-linked (Xyl...) (glycosaminoglycan) serine). Ser98, Ser100, Ser102, Ser104, Ser106, and Ser108 each carry an O-linked (Xyl...) (glycosaminoglycan) serine glycan.

Belongs to the serglycin family. Binds to activated CD44 and to GZMB. In terms of processing, O-glycosylated; contains chondroitin sulfate and heparan sulfate.

Its subcellular location is the cytoplasmic granule. It localises to the cytolytic granule. It is found in the secreted. The protein resides in the extracellular space. The protein localises to the golgi apparatus. In terms of biological role, plays a role in formation of mast cell secretory granules and mediates storage of various compounds in secretory vesicles. Required for storage of some proteases in both connective tissue and mucosal mast cells and for storage of granzyme B in T-lymphocytes. Plays a role in localizing neutrophil elastase in azurophil granules of neutrophils. Mediates processing of MMP2. Plays a role in cytotoxic cell granule-mediated apoptosis by forming a complex with granzyme B which is delivered to cells by perforin to induce apoptosis. Regulates the secretion of TNF-alpha and may also regulate protease secretion. Inhibits bone mineralization. This chain is Serglycin (Srgn), found in Mus musculus (Mouse).